Here is a 594-residue protein sequence, read N- to C-terminus: Dual specificity protein phosphatase CDC14A (594 aa).

The interval 7 to 162 (ELIGACEFMK…GLQHGFFDFE (156 aa)) is a. A linker region spans residues 163 to 176 (TFDVDEYEHYERVE). The b stretch occupies residues 177–343 (NGDFNWIVPG…QGDIFRSKLK (167 aa)). The 158-residue stretch at 179 to 336 (DFNWIVPGKF…KQASLWVQGD (158 aa)) folds into the Tyrosine-protein phosphatase domain. Cysteine 278 acts as the Phosphocysteine intermediate in catalysis. The disordered stretch occupies residues 396–435 (GDKLRALKSQRQPRTSPSCAFRSDDTKGHPRAVSQPFRLS). Residues 404–413 (SQRQPRTSPS) are compositionally biased toward polar residues. Serine 484 is subject to Phosphoserine. The segment at 487 to 560 (NLNAATDDPE…PGPHSAKTEE (74 aa)) is disordered. A compositionally biased stretch (polar residues) spans 500 to 531 (TSSSSKAGFTASPFTNLLNGSSQPTTRNYPEL). The span at 532–549 (NNNQYNRSSNSNGGNLNS) shows a compositional bias: low complexity. Residue serine 583 is modified to Phosphoserine.

This sequence belongs to the protein-tyrosine phosphatase family. Non-receptor class CDC14 subfamily. Interacts with KIF20A, which is required to localize CDC14 to the midzone of the mitotic spindle.

It localises to the nucleus. The protein resides in the cytoplasm. The protein localises to the cytoskeleton. It is found in the microtubule organizing center. Its subcellular location is the centrosome. It localises to the spindle pole. The protein resides in the spindle. The protein localises to the cell projection. It is found in the kinocilium. Its subcellular location is the stereocilium. The enzyme catalyses O-phospho-L-tyrosyl-[protein] + H2O = L-tyrosyl-[protein] + phosphate. The catalysed reaction is O-phospho-L-seryl-[protein] + H2O = L-seryl-[protein] + phosphate. It carries out the reaction O-phospho-L-threonyl-[protein] + H2O = L-threonyl-[protein] + phosphate. Its function is as follows. Dual-specificity phosphatase. Required for centrosome separation and productive cytokinesis during cell division. Dephosphorylates SIRT2 around early anaphase. May dephosphorylate the APC subunit FZR1/CDH1, thereby promoting APC-FZR1 dependent degradation of mitotic cyclins and subsequent exit from mitosis. Required for normal hearing. This is Dual specificity protein phosphatase CDC14A (CDC14A) from Homo sapiens (Human).